The sequence spans 505 residues: Histidine ammonia-lyase (505 aa).

The 5-imidazolinone (Ala-Gly) cross-link spans 141 to 143; sequence ASG. Position 142 is a 2,3-didehydroalanine (Ser) (Ser-142).

Belongs to the PAL/histidase family. In terms of processing, contains an active site 4-methylidene-imidazol-5-one (MIO), which is formed autocatalytically by cyclization and dehydration of residues Ala-Ser-Gly.

It localises to the cytoplasm. The enzyme catalyses L-histidine = trans-urocanate + NH4(+). It participates in amino-acid degradation; L-histidine degradation into L-glutamate; N-formimidoyl-L-glutamate from L-histidine: step 1/3. This chain is Histidine ammonia-lyase, found in Bacillus anthracis.